Reading from the N-terminus, the 761-residue chain is 5-methyltetrahydropteroyltriglutamate--homocysteine methyltransferase (761 aa).

5-methyltetrahydropteroyltri-L-glutamate is bound by residues Arg-16–Lys-19 and Lys-116. Residues Ile-435–Ser-437 and Glu-488 each bind L-homocysteine. L-methionine contacts are provided by residues Ile-435 to Ser-437 and Glu-488. Residues Arg-519–Cys-520 and Trp-565 contribute to the 5-methyltetrahydropteroyltri-L-glutamate site. Asp-603 provides a ligand contact to L-homocysteine. Asp-603 lines the L-methionine pocket. Glu-609 is a 5-methyltetrahydropteroyltri-L-glutamate binding site. Zn(2+)-binding residues include His-645, Cys-647, and Glu-669. Catalysis depends on His-698, which acts as the Proton donor. Cys-730 provides a ligand contact to Zn(2+).

This sequence belongs to the vitamin-B12 independent methionine synthase family. Zn(2+) serves as cofactor.

It carries out the reaction 5-methyltetrahydropteroyltri-L-glutamate + L-homocysteine = tetrahydropteroyltri-L-glutamate + L-methionine. The protein operates within amino-acid biosynthesis; L-methionine biosynthesis via de novo pathway; L-methionine from L-homocysteine (MetE route): step 1/1. Catalyzes the transfer of a methyl group from 5-methyltetrahydrofolate to homocysteine resulting in methionine formation. This Hahella chejuensis (strain KCTC 2396) protein is 5-methyltetrahydropteroyltriglutamate--homocysteine methyltransferase.